A 384-amino-acid polypeptide reads, in one-letter code: Sphingosine 1-phosphate receptor 4 (384 aa).

Over 1 to 50 (MNATGTPVAPESCQQLAAGGHSRLIVLHYNHSGRLAGRGGPEDGGLGALR) the chain is Extracellular. 2 N-linked (GlcNAc...) asparagine glycosylation sites follow: asparagine 2 and asparagine 30. A helical membrane pass occupies residues 51–71 (GLSVAASCLVVLENLLVLAAI). The Cytoplasmic segment spans residues 72–84 (TSHMRSRRWVYYC). A helical membrane pass occupies residues 85–105 (LVNITLSDLLTGAAYLANVLL). Over 106–117 (SGARTFRLAPAQ) the chain is Extracellular. A helical transmembrane segment spans residues 118 to 138 (WFLREGLLFTALAASTFSLLF). Topologically, residues 139-161 (TAGERFATMVRPVAESGATKTSR) are cytoplasmic. The chain crosses the membrane as a helical span at residues 162-182 (VYGFIGLCWLLAALLGMLPLL). At 183-206 (GWNCLCAFDRCSSLLPLYSKRYIL) the chain is on the extracellular side. The chain crosses the membrane as a helical span at residues 207–227 (FCLVIFAGVLATIMGLYGAIF). The Cytoplasmic segment spans residues 228-252 (RLVQASGQKAPRPAARRKARRLLKT). A helical transmembrane segment spans residues 253-273 (VLMILLAFLVCWGPLFGLLLA). Topologically, residues 274-288 (DVFGSNLWAQEYLRG) are extracellular. A helical transmembrane segment spans residues 289-309 (MDWILALAVLNSAVNPIIYSF). Residues 310–384 (RSREVCRAVL…LSSISSVRSI (75 aa)) lie on the Cytoplasmic side of the membrane. The S-palmitoyl cysteine moiety is linked to residue cysteine 323.

This sequence belongs to the G-protein coupled receptor 1 family. As to expression, specifically expressed in fetal and adult lymphoid and hematopoietic tissue as well as in lung. Considerable level of expression in adult and fetal spleen as well as adult peripheral leukocytes and lung. Lower expression in adult thymus, lymph node, bone marrow, and appendix as well as in fetal liver, thymus, and lung.

It is found in the cell membrane. Receptor for the lysosphingolipid sphingosine 1-phosphate (S1P). S1P is a bioactive lysophospholipid that elicits diverse physiological effect on most types of cells and tissues. May be involved in cell migration processes that are specific for lymphocytes. The protein is Sphingosine 1-phosphate receptor 4 (S1PR4) of Homo sapiens (Human).